Reading from the N-terminus, the 503-residue chain is Geissoschizine oxidase (503 aa).

A helical transmembrane segment spans residues 7-27 (FSSPSFFFLLPFLFLLIKPLI). Position 441 (Cys-441) interacts with heme.

It belongs to the cytochrome P450 family. Heme is required as a cofactor.

Its subcellular location is the membrane. The enzyme catalyses (19E)-geissoschizine + reduced [NADPH--hemoprotein reductase] + O2 = akuammicine + formate + oxidized [NADPH--hemoprotein reductase] + H2O + H(+). It carries out the reaction (19E)-geissoschizine + reduced [NADPH--hemoprotein reductase] + O2 = 3,17-didehydrostemmadenine + oxidized [NADPH--hemoprotein reductase] + 2 H2O. It catalyses the reaction 3,17-didehydrostemmadenine = 17-dehydropreakuammicine. It functions in the pathway alkaloid biosynthesis. Monooxygenase involved in the biosynthesis of curare monoterpene indole alkaloids (MIAs), natural products such as diaboline, a pharmacologically active compound used to regulate blood pressure. Curare alkaloids act as animal glycine receptor antagonists. Catalyzes the conversion of geissoschizine to dehydropreakuammicine by cyclization, which is spontaneously converted into akuammicine by aromatization. This chain is Geissoschizine oxidase, found in Strychnos sp.